Reading from the N-terminus, the 370-residue chain is 3-dehydroquinate synthase (370 aa).

Residues 70–75 (DAEDGK), 104–108 (GAATD), 128–129 (TT), Lys141, Lys150, and 168–171 (TLET) contribute to the NAD(+) site. Zn(2+)-binding residues include Glu183, His246, and His262.

This sequence belongs to the sugar phosphate cyclases superfamily. Dehydroquinate synthase family. Co(2+) is required as a cofactor. Requires Zn(2+) as cofactor. It depends on NAD(+) as a cofactor.

It localises to the cytoplasm. The catalysed reaction is 7-phospho-2-dehydro-3-deoxy-D-arabino-heptonate = 3-dehydroquinate + phosphate. It functions in the pathway metabolic intermediate biosynthesis; chorismate biosynthesis; chorismate from D-erythrose 4-phosphate and phosphoenolpyruvate: step 2/7. In terms of biological role, catalyzes the conversion of 3-deoxy-D-arabino-heptulosonate 7-phosphate (DAHP) to dehydroquinate (DHQ). The polypeptide is 3-dehydroquinate synthase (Rhodococcus opacus (strain B4)).